Reading from the N-terminus, the 204-residue chain is Imidazoleglycerol-phosphate dehydratase (204 aa).

This sequence belongs to the imidazoleglycerol-phosphate dehydratase family.

Its subcellular location is the cytoplasm. The enzyme catalyses D-erythro-1-(imidazol-4-yl)glycerol 3-phosphate = 3-(imidazol-4-yl)-2-oxopropyl phosphate + H2O. Its pathway is amino-acid biosynthesis; L-histidine biosynthesis; L-histidine from 5-phospho-alpha-D-ribose 1-diphosphate: step 6/9. The chain is Imidazoleglycerol-phosphate dehydratase from Rhodococcus jostii (strain RHA1).